Consider the following 38-residue polypeptide: Large ribosomal subunit protein bL36 (38 aa).

It belongs to the bacterial ribosomal protein bL36 family.

The protein is Large ribosomal subunit protein bL36 of Pelodictyon phaeoclathratiforme (strain DSM 5477 / BU-1).